Consider the following 505-residue polypeptide: Protein phosphatase 1J (505 aa).

The disordered stretch occupies residues 1-103 (MLNRVRSAVA…PPDTGRRLPW (103 aa)). Positions 27 to 50 (DLPNAASAPPAAAPEAPRSPPAKA) are enriched in low complexity. Ser66 and Ser76 each carry phosphoserine. One can recognise a PPM-type phosphatase domain in the interval 104-498 (STGYAEVINA…DDISVFVIPL (395 aa)).

The protein belongs to the PP2C family. As to quaternary structure, interacts with UBE2I/UBC9.

The enzyme catalyses O-phospho-L-seryl-[protein] + H2O = L-seryl-[protein] + phosphate. It carries out the reaction O-phospho-L-threonyl-[protein] + H2O = L-threonyl-[protein] + phosphate. This Homo sapiens (Human) protein is Protein phosphatase 1J (PPM1J).